Reading from the N-terminus, the 151-residue chain is SsrA-binding protein (151 aa).

The interval 124-151 (GKKLHDKRESEKERDWNRQKSRLLKAHG) is disordered. Over residues 129–141 (DKRESEKERDWNR) the composition is skewed to basic and acidic residues. Basic residues predominate over residues 142 to 151 (QKSRLLKAHG).

It belongs to the SmpB family.

The protein localises to the cytoplasm. Required for rescue of stalled ribosomes mediated by trans-translation. Binds to transfer-messenger RNA (tmRNA), required for stable association of tmRNA with ribosomes. tmRNA and SmpB together mimic tRNA shape, replacing the anticodon stem-loop with SmpB. tmRNA is encoded by the ssrA gene; the 2 termini fold to resemble tRNA(Ala) and it encodes a 'tag peptide', a short internal open reading frame. During trans-translation Ala-aminoacylated tmRNA acts like a tRNA, entering the A-site of stalled ribosomes, displacing the stalled mRNA. The ribosome then switches to translate the ORF on the tmRNA; the nascent peptide is terminated with the 'tag peptide' encoded by the tmRNA and targeted for degradation. The ribosome is freed to recommence translation, which seems to be the essential function of trans-translation. The sequence is that of SsrA-binding protein from Rhizobium johnstonii (strain DSM 114642 / LMG 32736 / 3841) (Rhizobium leguminosarum bv. viciae).